The chain runs to 246 residues: Transmembrane protein 41 homolog (246 aa).

6 helical membrane-spanning segments follow: residues 12–32 (WLVLLIFATFAVSIFAVYSNF), 68–88 (SVVLCGVIVVYVFLQSFAIPG), 101–123 (PFYVAIVLVCSCSATGAAICYTI), 159–179 (IFLRVTPIVPNWLINIASPVL), 182–202 (PLAPFFWGTFLGVAPPSFLYI), and 219–239 (SWSSIVLLTGSAILSLAPILL).

Belongs to the TMEM41 family.

It is found in the membrane. This Caenorhabditis elegans protein is Transmembrane protein 41 homolog (tag-175).